The chain runs to 454 residues: Mannosylfructose-phosphate synthase (454 aa).

It belongs to the glycosyltransferase 1 family. Requires Mg(2+) as cofactor. It depends on Mn(2+) as a cofactor.

The catalysed reaction is beta-D-fructose 6-phosphate + GDP-alpha-D-mannose = beta-D-fructofuranosyl alpha-D-mannopyranoside 6(F)-phosphate + GDP + H(+). It functions in the pathway carbohydrate metabolism; mannosylfructose biosynthesis; beta-D-fructofuranosyl alpha-D-mannopyranoside from D-fructose 6-phosphate and GDP-alpha-D-mannose: step 1/2. The sequence is that of Mannosylfructose-phosphate synthase from Agrobacterium fabrum (strain C58 / ATCC 33970) (Agrobacterium tumefaciens (strain C58)).